A 214-amino-acid chain; its full sequence is Pyridoxine/pyridoxamine 5'-phosphate oxidase (214 aa).

Substrate-binding positions include 8-11 (RTNY) and K66. FMN-binding positions include 61-66 (RIVLIK), 76-77 (FT), R82, K83, and Q105. 3 residues coordinate substrate: Y123, R127, and S131. Residues 140–141 (QS) and W184 contribute to the FMN site. 190–192 (RLH) contacts substrate. R194 contributes to the FMN binding site.

This sequence belongs to the pyridoxamine 5'-phosphate oxidase family. In terms of assembly, homodimer. The cofactor is FMN.

It catalyses the reaction pyridoxamine 5'-phosphate + O2 + H2O = pyridoxal 5'-phosphate + H2O2 + NH4(+). The catalysed reaction is pyridoxine 5'-phosphate + O2 = pyridoxal 5'-phosphate + H2O2. It functions in the pathway cofactor metabolism; pyridoxal 5'-phosphate salvage; pyridoxal 5'-phosphate from pyridoxamine 5'-phosphate: step 1/1. The protein operates within cofactor metabolism; pyridoxal 5'-phosphate salvage; pyridoxal 5'-phosphate from pyridoxine 5'-phosphate: step 1/1. Functionally, catalyzes the oxidation of either pyridoxine 5'-phosphate (PNP) or pyridoxamine 5'-phosphate (PMP) into pyridoxal 5'-phosphate (PLP). The sequence is that of Pyridoxine/pyridoxamine 5'-phosphate oxidase from Burkholderia thailandensis (strain ATCC 700388 / DSM 13276 / CCUG 48851 / CIP 106301 / E264).